We begin with the raw amino-acid sequence, 225 residues long: Single-pass membrane and coiled-coil domain-containing protein 3 (225 aa).

The stretch at 62-92 forms a coiled coil; it reads IKENCDLIIQAIMKIQKELQKVDEALKDKLE. Residues 155–175 traverse the membrane as a helical segment; the sequence is IGASLLGSIGVAVLGLGIDMI. The stretch at 183 to 207 forms a coiled coil; it reads VEKTQLQAAIKSYEKHLVEFKSASE.

The protein resides in the membrane. The polypeptide is Single-pass membrane and coiled-coil domain-containing protein 3 (SMCO3) (Homo sapiens (Human)).